A 256-amino-acid chain; its full sequence is 1-(5-phosphoribosyl)-5-[(5-phosphoribosylamino)methylideneamino] imidazole-4-carboxamide isomerase (256 aa).

Residue Asp8 is the Proton acceptor of the active site. Asp129 serves as the catalytic Proton donor.

Belongs to the HisA/HisF family.

Its subcellular location is the cytoplasm. The enzyme catalyses 1-(5-phospho-beta-D-ribosyl)-5-[(5-phospho-beta-D-ribosylamino)methylideneamino]imidazole-4-carboxamide = 5-[(5-phospho-1-deoxy-D-ribulos-1-ylimino)methylamino]-1-(5-phospho-beta-D-ribosyl)imidazole-4-carboxamide. It participates in amino-acid biosynthesis; L-histidine biosynthesis; L-histidine from 5-phospho-alpha-D-ribose 1-diphosphate: step 4/9. The sequence is that of 1-(5-phosphoribosyl)-5-[(5-phosphoribosylamino)methylideneamino] imidazole-4-carboxamide isomerase from Synechococcus sp. (strain CC9311).